A 496-amino-acid chain; its full sequence is 1-aminocyclopropane-1-carboxylate synthase 4 (496 aa).

At K300 the chain carries N6-(pyridoxal phosphate)lysine.

This sequence belongs to the class-I pyridoxal-phosphate-dependent aminotransferase family. It depends on pyridoxal 5'-phosphate as a cofactor. As to expression, expressed in leaves. Expressed in shoots and leaf blades. Expressed at low levels in leaf sheaths.

It catalyses the reaction S-adenosyl-L-methionine = 1-aminocyclopropane-1-carboxylate + S-methyl-5'-thioadenosine + H(+). Its pathway is alkene biosynthesis; ethylene biosynthesis via S-adenosyl-L-methionine; ethylene from S-adenosyl-L-methionine: step 1/2. Catalyzes the formation of 1-aminocyclopropane-1-carboxylate, a direct precursor of ethylene in higher plants. The sequence is that of 1-aminocyclopropane-1-carboxylate synthase 4 from Oryza sativa subsp. japonica (Rice).